Consider the following 232-residue polypeptide: Large ribosomal subunit protein uL1 (232 aa).

This sequence belongs to the universal ribosomal protein uL1 family. In terms of assembly, part of the 50S ribosomal subunit.

Its function is as follows. Binds directly to 23S rRNA. The L1 stalk is quite mobile in the ribosome, and is involved in E site tRNA release. Functionally, protein L1 is also a translational repressor protein, it controls the translation of the L11 operon by binding to its mRNA. The chain is Large ribosomal subunit protein uL1 from Methylobacterium radiotolerans (strain ATCC 27329 / DSM 1819 / JCM 2831 / NBRC 15690 / NCIMB 10815 / 0-1).